Consider the following 515-residue polypeptide: Maturase K (515 aa).

The protein belongs to the intron maturase 2 family. MatK subfamily.

The protein localises to the plastid. Its subcellular location is the chloroplast. In terms of biological role, usually encoded in the trnK tRNA gene intron. Probably assists in splicing its own and other chloroplast group II introns. This is Maturase K from Pinus tabuliformis (Chinese red pine).